A 325-amino-acid polypeptide reads, in one-letter code: Leucine carboxyl methyltransferase 1 (325 aa).

S-adenosyl-L-methionine-binding positions include R79, G104, D127, D174–L175, and E200.

It belongs to the methyltransferase superfamily. LCMT family.

The catalysed reaction is [phosphatase 2A protein]-C-terminal L-leucine + S-adenosyl-L-methionine = [phosphatase 2A protein]-C-terminal L-leucine methyl ester + S-adenosyl-L-homocysteine. Functionally, methylates the carboxyl group of the C-terminal leucine residue of protein phosphatase 2A catalytic subunits to form alpha-leucine ester residues. The chain is Leucine carboxyl methyltransferase 1 (PPM1) from Eremothecium gossypii (strain ATCC 10895 / CBS 109.51 / FGSC 9923 / NRRL Y-1056) (Yeast).